The sequence spans 486 residues: NADH-quinone oxidoreductase subunit N (486 aa).

13 helical membrane passes run 5–25 (IGLS…ASLL), 41–61 (LITL…LVVF), 77–97 (GVTQ…MVMM), 118–138 (SAVG…FIGL), 165–185 (YFIL…FIFG), 209–229 (FLFG…IAPF), 245–265 (TAFM…RIIA), 275–295 (LFDI…AAAI), 304–324 (IAYS…TAGV), 335–355 (VIFY…IAAM), 380–400 (ALCL…LGFF), 413–433 (GLLW…YYYL), and 458–478 (VTAV…GPIF).

This sequence belongs to the complex I subunit 2 family. In terms of assembly, NDH-1 is composed of 14 different subunits. Subunits NuoA, H, J, K, L, M, N constitute the membrane sector of the complex.

The protein resides in the cell inner membrane. It carries out the reaction a quinone + NADH + 5 H(+)(in) = a quinol + NAD(+) + 4 H(+)(out). Functionally, NDH-1 shuttles electrons from NADH, via FMN and iron-sulfur (Fe-S) centers, to quinones in the respiratory chain. The immediate electron acceptor for the enzyme in this species is believed to be ubiquinone. Couples the redox reaction to proton translocation (for every two electrons transferred, four hydrogen ions are translocated across the cytoplasmic membrane), and thus conserves the redox energy in a proton gradient. The sequence is that of NADH-quinone oxidoreductase subunit N from Bdellovibrio bacteriovorus (strain ATCC 15356 / DSM 50701 / NCIMB 9529 / HD100).